A 760-amino-acid polypeptide reads, in one-letter code: Cellulose synthase-like protein G1 (760 aa).

The next 2 membrane-spanning stretches (helical) occupy residues Ile28–Leu48 and Thr54–Thr74. Active-site residues include Asp142 and Asp447. Helical transmembrane passes span Ile530–Phe550, Phe558–Leu578, Leu593–Leu613, Val656–Gly676, and Leu680–Val700.

This sequence belongs to the glycosyltransferase 2 family. Plant cellulose synthase-like G subfamily. As to expression, expressed in young seedlings, primarily in the vascular tissue.

It is found in the golgi apparatus membrane. In terms of biological role, thought to be a Golgi-localized beta-glycan synthase that polymerize the backbones of noncellulosic polysaccharides (hemicelluloses) of plant cell wall. The polypeptide is Cellulose synthase-like protein G1 (CSLG1) (Arabidopsis thaliana (Mouse-ear cress)).